Here is a 136-residue protein sequence, read N- to C-terminus: Secreted RxLR effector protein 10 (136 aa).

The N-terminal stretch at 1–22 is a signal peptide; that stretch reads MRVLNFVLTTTVVLLTSSEGIA. A RxLR-dEER motif is present at residues 42–56; that stretch reads RSLRATENPGSDESR. The segment at 42–78 is disordered; sequence RSLRATENPGSDESRLNEKDTGFDPDGSSSKEDEDIG. The segment covering 53-63 has biased composition (basic and acidic residues); the sequence is DESRLNEKDTG.

It belongs to the RxLR effector family.

It localises to the secreted. It is found in the host cytoplasm. The protein localises to the host nucleus. In terms of biological role, effector that acts as a broad suppressor of cell death to interrupt plant immunity. Inhibits cell death induced by cell death-inducing proteins, including the PAMP elicitor INF1 from P.infestans. This is Secreted RxLR effector protein 10 from Plasmopara viticola (Downy mildew of grapevine).